We begin with the raw amino-acid sequence, 214 residues long: UPF0502 protein Acid345_3645 (214 aa).

Belongs to the UPF0502 family.

In Koribacter versatilis (strain Ellin345), this protein is UPF0502 protein Acid345_3645.